A 454-amino-acid polypeptide reads, in one-letter code: Bifunctional protein GlmU (454 aa).

The tract at residues 1 to 226 (MSLEIVILAA…AMEVQGVNDR (226 aa)) is pyrophosphorylase. Residues 8 to 11 (LAAG), K22, Q73, 78 to 79 (GT), 99 to 101 (YGD), G136, E151, N166, and N224 each bind UDP-N-acetyl-alpha-D-glucosamine. D101 is a Mg(2+) binding site. Residue N224 coordinates Mg(2+). The interval 227 to 247 (MQQAQLERHYQRLRAEELMRQ) is linker. An N-acetyltransferase region spans residues 248-454 (GVTLLDPQRL…NWKRPEKIRK (207 aa)). The UDP-N-acetyl-alpha-D-glucosamine site is built by R330 and K348. The active-site Proton acceptor is the H360. UDP-N-acetyl-alpha-D-glucosamine contacts are provided by Y363 and N374. Residues A377, 383–384 (NY), S402, A420, and R437 each bind acetyl-CoA.

This sequence in the N-terminal section; belongs to the N-acetylglucosamine-1-phosphate uridyltransferase family. In the C-terminal section; belongs to the transferase hexapeptide repeat family. As to quaternary structure, homotrimer. Requires Mg(2+) as cofactor.

The protein resides in the cytoplasm. It catalyses the reaction alpha-D-glucosamine 1-phosphate + acetyl-CoA = N-acetyl-alpha-D-glucosamine 1-phosphate + CoA + H(+). The catalysed reaction is N-acetyl-alpha-D-glucosamine 1-phosphate + UTP + H(+) = UDP-N-acetyl-alpha-D-glucosamine + diphosphate. The protein operates within nucleotide-sugar biosynthesis; UDP-N-acetyl-alpha-D-glucosamine biosynthesis; N-acetyl-alpha-D-glucosamine 1-phosphate from alpha-D-glucosamine 6-phosphate (route II): step 2/2. Its pathway is nucleotide-sugar biosynthesis; UDP-N-acetyl-alpha-D-glucosamine biosynthesis; UDP-N-acetyl-alpha-D-glucosamine from N-acetyl-alpha-D-glucosamine 1-phosphate: step 1/1. It participates in bacterial outer membrane biogenesis; LPS lipid A biosynthesis. Its function is as follows. Catalyzes the last two sequential reactions in the de novo biosynthetic pathway for UDP-N-acetylglucosamine (UDP-GlcNAc). The C-terminal domain catalyzes the transfer of acetyl group from acetyl coenzyme A to glucosamine-1-phosphate (GlcN-1-P) to produce N-acetylglucosamine-1-phosphate (GlcNAc-1-P), which is converted into UDP-GlcNAc by the transfer of uridine 5-monophosphate (from uridine 5-triphosphate), a reaction catalyzed by the N-terminal domain. The polypeptide is Bifunctional protein GlmU (Pseudomonas paraeruginosa (strain DSM 24068 / PA7) (Pseudomonas aeruginosa (strain PA7))).